The chain runs to 439 residues: Xylose isomerase (439 aa).

Residues H101 and D104 contribute to the active site. Positions 232, 268, 271, 296, 307, 309, and 339 each coordinate Mg(2+).

The protein belongs to the xylose isomerase family. Homotetramer. Requires Mg(2+) as cofactor.

It is found in the cytoplasm. It catalyses the reaction alpha-D-xylose = alpha-D-xylulofuranose. This Thermoanaerobacterium thermosaccharolyticum (strain ATCC 7956 / DSM 571 / NCIMB 9385 / NCA 3814 / NCTC 13789 / WDCM 00135 / 2032) (Clostridium thermosaccharolyticum) protein is Xylose isomerase (xylA).